A 266-amino-acid polypeptide reads, in one-letter code: UPF0354 protein Lm4b_01619 (266 aa).

This sequence belongs to the UPF0354 family.

This is UPF0354 protein Lm4b_01619 from Listeria monocytogenes serotype 4b (strain CLIP80459).